A 389-amino-acid chain; its full sequence is Phospho-N-acetylmuramoyl-pentapeptide-transferase (389 aa).

10 helical membrane passes run 21–41 (FITFRAVFATLTALVIGLVTG), 70–90 (GTPTMGGVLILVSIGISTLLW), 97–117 (FIWVVLIVTLGFGAVGWVDDY), 134–154 (YMWQSIIGLFAAIYLAFSVSA), 189–209 (TISYPLGVWGFIALTYFVIVG), 222–242 (GLAIMPTVMVGTALGLFAYLT), 259–279 (AGELIIFCGAMAGAGLAFLWF), 286–306 (VFMGDVGALALGGALGTIAVI), 311–331 (VVLFIMGGIFVVETLSVMLQV), and 366–386 (QVVVRFWIITMMLVLFGLSTL).

Belongs to the glycosyltransferase 4 family. MraY subfamily. Requires Mg(2+) as cofactor.

It is found in the cell inner membrane. It carries out the reaction UDP-N-acetyl-alpha-D-muramoyl-L-alanyl-gamma-D-glutamyl-meso-2,6-diaminopimeloyl-D-alanyl-D-alanine + di-trans,octa-cis-undecaprenyl phosphate = di-trans,octa-cis-undecaprenyl diphospho-N-acetyl-alpha-D-muramoyl-L-alanyl-D-glutamyl-meso-2,6-diaminopimeloyl-D-alanyl-D-alanine + UMP. It functions in the pathway cell wall biogenesis; peptidoglycan biosynthesis. Its function is as follows. Catalyzes the initial step of the lipid cycle reactions in the biosynthesis of the cell wall peptidoglycan: transfers peptidoglycan precursor phospho-MurNAc-pentapeptide from UDP-MurNAc-pentapeptide onto the lipid carrier undecaprenyl phosphate, yielding undecaprenyl-pyrophosphoryl-MurNAc-pentapeptide, known as lipid I. This chain is Phospho-N-acetylmuramoyl-pentapeptide-transferase, found in Janthinobacterium sp. (strain Marseille) (Minibacterium massiliensis).